A 166-amino-acid chain; its full sequence is Signal peptidase complex catalytic subunit SEC11 (166 aa).

Topologically, residues 1–9 are cytoplasmic; sequence MNIRQQITQ. A helical; Signal-anchor for type II membrane protein membrane pass occupies residues 10-30; that stretch reads FLSLAYVFSSAFMLWKTLSVI. Residues 31–166 are Lumenal-facing; that stretch reads ANSHSPIVVV…LGLSSLFSNE (136 aa). Residues S44, H83, and D108 each act as charge relay system in the active site. Positions 152–163 are C-terminal short (CTS) helix; sequence GMLGLLGLSSLF.

This sequence belongs to the peptidase S26B family. As to quaternary structure, component of the signal peptidase complex (SPC) composed of a catalytic subunit SEC11 and three accessory subunits SPC1, SPC2 and SPC3. The complex induces a local thinning of the ER membrane which is used to measure the length of the signal peptide (SP) h-region of protein substrates. This ensures the selectivity of the complex towards h-regions shorter than 18-20 amino acids. SPC associates with the translocon complex.

The protein resides in the endoplasmic reticulum membrane. The enzyme catalyses Cleavage of hydrophobic, N-terminal signal or leader sequences from secreted and periplasmic proteins.. In terms of biological role, catalytic component of the signal peptidase complex (SPC) which catalyzes the cleavage of N-terminal signal sequences from nascent proteins as they are translocated into the lumen of the endoplasmic reticulum. Specifically cleaves N-terminal signal peptides that contain a hydrophobic alpha-helix (h-region) shorter than 18-20 amino acids. This Candida dubliniensis (strain CD36 / ATCC MYA-646 / CBS 7987 / NCPF 3949 / NRRL Y-17841) (Yeast) protein is Signal peptidase complex catalytic subunit SEC11 (SEC11).